The following is a 441-amino-acid chain: Myocyte-specific enhancer factor 2C (441 aa).

The 61-residue stretch at 1–61 (MGRKKIQITR…NKLFQYASTD (61 aa)) folds into the MADS-box domain. An N6-acetyllysine modification is found at Lys4. Positions 58 to 86 (ASTDMDKVLLKYTEYNEPHESRTNSDIVE) form a DNA-binding region, mef2-type. Ser59 carries the post-translational modification Phosphoserine; by CK2. The interval 91–116 (KGLNGCDSPDPDADDSVGHSPESEDK) is disordered. Ser98, Ser106, and Ser110 each carry phosphoserine. 2 positions are modified to N6-acetyllysine: Lys116 and Lys119. The segment at 180-224 (NSMSPGVTHRPPSAGNTGGLMGGDLTSGAGTSAGNGYGNPRNSPG) is disordered. A phosphoserine mark is found at Ser222 and Ser228. An N6-acetyllysine mark is found at Lys234 and Lys239. The residue at position 240 (Ser240) is a Phosphoserine. N6-acetyllysine is present on residues Lys252 and Lys264. Residues 271–278 (SEDVDLLL) form a beta domain region. A phosphothreonine; by MAPK7 and MAPK14 mark is found at Thr293 and Thr300. The segment at 353-441 (QHLHSMPPSA…RMRLSEGWAT (89 aa)) is disordered. Positions 362-377 (ALSQLGDRTTTPSRYP) are enriched in polar residues. At Ser387 the chain carries Phosphoserine; by MAPK7. The span at 387–400 (SPVDSLSSCSSSYD) shows a compositional bias: low complexity. Residues 401–411 (GSDREDHRNEF) are compositionally biased toward basic and acidic residues. Ser413 is subject to Phosphoserine.

It belongs to the MEF2 family. Forms a complex with class II HDACs in undifferentiating cells. On myogenic differentiation, HDACs are released into the cytoplasm allowing MEF2s to interact with other proteins for activation. Interacts with EP300 in differentiating cells; the interaction acetylates MEF2C leading to increased DNA binding and activation. Interacts with HDAC7 and CARM1. Interacts with HDAC4, HDAC7 and HDAC9; the interaction with HDACs represses transcriptional activity. Interacts with LPIN1. Interacts with MYOCD. Interacts with AKAP13. Interacts with FOXK1; the interaction inhibits MEF2C transactivation activity. Interacts (via N-terminus) with HABP4; this interaction decreases DNA-binding activity of MEF2C in myocardial cells in response to mechanical stress. Interacts with JPH2; interaction specifically takes place with the Junctophilin-2 N-terminal fragment cleavage product of JPH2. Interacts (via MADS box) with SOX18. Interacts with PHF7; the interaction promotes MEF2C binding to its transcription targets. Post-translationally, phosphorylation on Ser-59 enhances DNA binding activity. Acetylated by p300 on several sites in diffentiating myocytes. Acetylation on Lys-4 increases DNA binding and transactivation. In terms of processing, proteolytically cleaved in cerebellar granule neurons, probably by caspase 7, following neurotoxicity.

It localises to the nucleus. Its subcellular location is the cytoplasm. The protein localises to the sarcoplasm. Its function is as follows. Transcription activator which binds specifically to the MEF2 element present in the regulatory regions of many muscle-specific genes. Controls cardiac morphogenesis and myogenesis, and is also involved in vascular development. Enhances transcriptional activation mediated by SOX18. Plays an essential role in hippocampal-dependent learning and memory by suppressing the number of excitatory synapses and thus regulating basal and evoked synaptic transmission. Crucial for normal neuronal development, distribution, and electrical activity in the neocortex. Necessary for proper development of megakaryocytes and platelets and for bone marrow B-lymphopoiesis. Required for B-cell survival and proliferation in response to BCR stimulation, efficient IgG1 antibody responses to T-cell-dependent antigens and for normal induction of germinal center B-cells. May also be involved in neurogenesis and in the development of cortical architecture. In Bos taurus (Bovine), this protein is Myocyte-specific enhancer factor 2C.